The primary structure comprises 874 residues: Alanine--tRNA ligase (874 aa).

Positions 562, 566, 665, and 669 each coordinate Zn(2+).

It belongs to the class-II aminoacyl-tRNA synthetase family. The cofactor is Zn(2+).

It is found in the cytoplasm. The catalysed reaction is tRNA(Ala) + L-alanine + ATP = L-alanyl-tRNA(Ala) + AMP + diphosphate. Its function is as follows. Catalyzes the attachment of alanine to tRNA(Ala) in a two-step reaction: alanine is first activated by ATP to form Ala-AMP and then transferred to the acceptor end of tRNA(Ala). Also edits incorrectly charged Ser-tRNA(Ala) and Gly-tRNA(Ala) via its editing domain. This chain is Alanine--tRNA ligase, found in Pseudomonas aeruginosa (strain ATCC 15692 / DSM 22644 / CIP 104116 / JCM 14847 / LMG 12228 / 1C / PRS 101 / PAO1).